Here is a 382-residue protein sequence, read N- to C-terminus: Gap junction alpha-1 protein (382 aa).

At 2–23 (GDWSALGKLLDKVQAYSTAGGK) the chain is on the cytoplasmic side. The residue at position 5 (Ser-5) is a Phosphoserine. A helical transmembrane segment spans residues 24-44 (VWLSVLFIFRILLLGTAVESA). Residues 45 to 76 (WGDEQSAFRCNTQQPGCENVCYDKSFPISHVR) lie on the Extracellular side of the membrane. 2 cysteine pairs are disulfide-bonded: Cys-54/Cys-192 and Cys-187/Cys-198. The helical transmembrane segment at 77-97 (FWVLQIIFVSVPTLLYLAHVF) threads the bilayer. Over 98-155 (YVMRKEEKLNKKEEELKVAQTDGANVDMHLKQIEIKKFKYGIEEHGKVKMRGGLLRTY) the chain is Cytoplasmic. Lys-144 participates in a covalent cross-link: Glycyl lysine isopeptide (Lys-Gly) (interchain with G-Cter in SUMO). The chain crosses the membrane as a helical span at residues 156–176 (IISILFKSVFEVAFLLIQWYI). Over 177-207 (YGFSLSAVYTCKRDPCPHQVDCFLSRPTEKT) the chain is Extracellular. A helical transmembrane segment spans residues 208 to 228 (IFIIFMLVVSLVSLALNIIEL). Residues 229 to 382 (FYVFFKGIKD…SRPRPDDLEI (154 aa)) lie on the Cytoplasmic side of the membrane. Residue Lys-237 forms a Glycyl lysine isopeptide (Lys-Gly) (interchain with G-Cter in SUMO) linkage. Residues 244-382 (SDLYHATTGP…SRPRPDDLEI (139 aa)) are interaction with NOV. Residue Tyr-247 is modified to Phosphotyrosine. 3 positions are modified to phosphoserine: Ser-255, Ser-257, and Ser-262. Residues 264–382 (TYAYFNGCSS…SRPRPDDLEI (119 aa)) form an interaction with UBQLN4 region. Position 271 is an S-nitrosocysteine (Cys-271). Residue Thr-275 is modified to Phosphothreonine. A phosphoserine mark is found at Ser-306 and Ser-314. Over residues 317-332 (QNRMGQAGSTISNSHA) the composition is skewed to polar residues. Residues 317–382 (QNRMGQAGST…SRPRPDDLEI (66 aa)) are disordered. A Phosphoserine; by CK1 modification is found at Ser-325. Thr-326 bears the Phosphothreonine mark. Phosphoserine; by CK1 occurs at positions 328 and 330. Phosphoserine is present on residues Ser-344 and Ser-365. Residues 362 to 374 (RPSSRASSRASSR) are compositionally biased toward low complexity. At Ser-368 the chain carries Phosphoserine; by PKC/PRKCG and PKC/PRKCD. Residues Ser-369 and Ser-373 each carry the phosphoserine modification.

It belongs to the connexin family. Alpha-type (group II) subfamily. As to quaternary structure, a connexon is composed of a hexamer of connexins. Interacts with SGSM3. Interacts with RIC1/CIP150. Interacts with CNST and CSNK1D. Interacts (via C-terminus) with TJP1. Interacts (via C-terminus) with SRC (via SH3 domain). Interacts (not ubiquitinated) with UBQLN4 (via UBA domain). Interacts with NOV. Interacts with TMEM65. Interacts with ANK3/ANKG and PKP2. In terms of processing, phosphorylation at Ser-325, Ser-328 and Ser-330 by CK1 modulates gap junction assembly. Phosphorylated at Ser-368 by PRKCG; phosphorylation induces disassembly of gap junction plaques and inhibition of gap junction activity. Phosphorylation at Ser-368 by PRKCD triggers its internalization into small vesicles leading to proteasome-mediated degradation. Post-translationally, sumoylated with SUMO1, SUMO2 and SUMO3, which may regulate the level of functional Cx43 gap junctions at the plasma membrane. May be desumoylated by SENP1 or SENP2. S-nitrosylation at Cys-271 is enriched at the muscle endothelial gap junction in arteries, it augments channel permeability and may regulate of smooth muscle cell to endothelial cell communication. In terms of processing, acetylated in the developing cortex; leading to delocalization from the cell membrane.

The protein resides in the cell membrane. Its subcellular location is the cell junction. The protein localises to the gap junction. It localises to the endoplasmic reticulum. Functionally, gap junction protein that acts as a regulator of bladder capacity. A gap junction consists of a cluster of closely packed pairs of transmembrane channels, the connexons, through which materials of low MW diffuse from one cell to a neighboring cell. May play a critical role in the physiology of hearing by participating in the recycling of potassium to the cochlear endolymph. Negative regulator of bladder functional capacity: acts by enhancing intercellular electrical and chemical transmission, thus sensitizing bladder muscles to cholinergic neural stimuli and causing them to contract. May play a role in cell growth inhibition through the regulation of NOV expression and localization. Plays an essential role in gap junction communication in the ventricles. The chain is Gap junction alpha-1 protein (GJA1) from Erinaceus europaeus (Western European hedgehog).